The primary structure comprises 348 residues: E3 ubiquitin-protein ligase MARCHF9 (348 aa).

The segment at 48 to 96 is disordered; that stretch reads ARDGDGDEEEYYGSEPRARGLAGDKEPRAGPPPPPAPPPPPPGALDALS. The segment covering 63–75 has biased composition (basic and acidic residues); sequence PRARGLAGDKEPR. Pro residues predominate over residues 76–90; the sequence is AGPPPPPAPPPPPPG. Residues 102 to 162 form an RING-CH-type zinc finger; the sequence is DSGLRTPQCR…ELCYFKYQVL (61 aa). The Zn(2+) site is built by Cys110, Cys113, Cys126, Cys128, His136, Cys139, Cys152, and Cys155. 2 consecutive transmembrane segments (helical) span residues 185-205 and 219-239; these read IAAI…LIWS and LFQI…GLIV. 2 disordered regions span residues 272-304 and 328-348; these read GDTG…AAQR and PPDA…VTTV.

As to quaternary structure, homodimer.

The protein resides in the golgi apparatus membrane. Its subcellular location is the lysosome membrane. It carries out the reaction S-ubiquitinyl-[E2 ubiquitin-conjugating enzyme]-L-cysteine + [acceptor protein]-L-lysine = [E2 ubiquitin-conjugating enzyme]-L-cysteine + N(6)-ubiquitinyl-[acceptor protein]-L-lysine.. It participates in protein modification; protein ubiquitination. Its function is as follows. E3 ubiquitin-protein ligase that may mediate ubiquitination of MHC-I, CD4 and ICAM1, and promote their subsequent endocytosis and sorting to lysosomes via multivesicular bodies. E3 ubiquitin ligases accept ubiquitin from an E2 ubiquitin-conjugating enzyme in the form of a thioester and then directly transfer the ubiquitin to targeted substrates. The polypeptide is E3 ubiquitin-protein ligase MARCHF9 (Marchf9) (Mus musculus (Mouse)).